The primary structure comprises 1045 residues: Protein transport protein Sec16B (1045 aa).

The segment covering 1–13 (MEPWVPQWPPPSR) has biased composition (pro residues). The segment at 1 to 78 (MEPWVPQWPP…PQHVPRLGAW (78 aa)) is disordered. The segment covering 22–33 (DSERGLQRDGYH) has biased composition (basic and acidic residues). Residues 50-60 (QDVQGSPQPQQ) show a composition bias toward polar residues. A phosphoserine mark is found at S55 and S137. Basic and acidic residues predominate over residues 149–168 (RHLSEHRPENQSRTFRRDSE). Disordered regions lie at residues 149 to 193 (RHLS…QERP), 707 to 733 (QQKA…TTES), 748 to 789 (APGC…YSVP), and 813 to 1045 (QTHS…TQPC). S186 bears the Phosphoserine mark. The tract at residues 267–711 (APKKFYIPHV…RHQELQQKAA (445 aa)) is central conserved domain (CCD); required for localization to endoplasmic reticulum exit sites. Residues 773–784 (GPAAGPAGAPVP) are compositionally biased toward low complexity. S852, S858, S866, and S867 each carry phosphoserine. Residues 916–926 (EDSSDSPDSEQ) are compositionally biased toward acidic residues. A compositionally biased stretch (pro residues) spans 942 to 953 (SPPPLLESPPLP). Gly residues predominate over residues 957–966 (AFGGGTGRGE). A compositionally biased stretch (polar residues) spans 989-998 (ESASSELYSN).

This sequence belongs to the SEC16 family. SEC16A and SEC16B are each present in multiple copies in a heteromeric complex. Interacts with TFG. Interacts with SEC13. Liver.

The protein localises to the endoplasmic reticulum membrane. Its subcellular location is the golgi apparatus membrane. In terms of biological role, plays a role in the organization of the endoplasmic reticulum exit sites (ERES), also known as transitional endoplasmic reticulum (tER). Required for secretory cargo traffic from the endoplasmic reticulum to the Golgi apparatus. Involved in peroxisome biogenesis. Regulates the transport of peroxisomal biogenesis factors PEX3 and PEX16 from the ER to peroxisomes. The polypeptide is Protein transport protein Sec16B (SEC16B) (Oryctolagus cuniculus (Rabbit)).